The sequence spans 265 residues: uncharacterized protein (265 aa).

Phosphoserine is present on Ser-223.

This is an uncharacterized protein from Saccharomyces cerevisiae (strain ATCC 204508 / S288c) (Baker's yeast).